The following is a 153-amino-acid chain: MAVKVVTENRRARHEYHILETFEAGLALRGTEVKSLRAGKASLQDSFARVENGELLLYNMHISPYEQGNQFNHEPKRTRRLLMHKYEILRLMGKTREKGLALIPLKVYFKNGLAKIELALAKGKKIYDRREDIASRDARREIDRAIKERMRLH.

Belongs to the SmpB family.

The protein resides in the cytoplasm. Functionally, required for rescue of stalled ribosomes mediated by trans-translation. Binds to transfer-messenger RNA (tmRNA), required for stable association of tmRNA with ribosomes. tmRNA and SmpB together mimic tRNA shape, replacing the anticodon stem-loop with SmpB. tmRNA is encoded by the ssrA gene; the 2 termini fold to resemble tRNA(Ala) and it encodes a 'tag peptide', a short internal open reading frame. During trans-translation Ala-aminoacylated tmRNA acts like a tRNA, entering the A-site of stalled ribosomes, displacing the stalled mRNA. The ribosome then switches to translate the ORF on the tmRNA; the nascent peptide is terminated with the 'tag peptide' encoded by the tmRNA and targeted for degradation. The ribosome is freed to recommence translation, which seems to be the essential function of trans-translation. In Pelotomaculum thermopropionicum (strain DSM 13744 / JCM 10971 / SI), this protein is SsrA-binding protein.